Reading from the N-terminus, the 328-residue chain is GMP reductase (328 aa).

Cysteine 176 functions as the Thioimidate intermediate in the catalytic mechanism. An NADP(+)-binding site is contributed by 205-228 (IIADGGIRTHGDIAKSIRFGASMI).

This sequence belongs to the IMPDH/GMPR family. GuaC type 2 subfamily.

The enzyme catalyses IMP + NH4(+) + NADP(+) = GMP + NADPH + 2 H(+). Its function is as follows. Catalyzes the irreversible NADPH-dependent deamination of GMP to IMP. It functions in the conversion of nucleobase, nucleoside and nucleotide derivatives of G to A nucleotides, and in maintaining the intracellular balance of A and G nucleotides. In Streptococcus pneumoniae (strain JJA), this protein is GMP reductase.